A 348-amino-acid chain; its full sequence is E3 ubiquitin-protein ligase MARCHF9 (348 aa).

The segment at 48–96 is disordered; it reads ARDGDGDEEEYYGSEPRARGLAGDKEPRAGPPPPPAPPPPPPGALDALS. Basic and acidic residues predominate over residues 63 to 75; it reads PRARGLAGDKEPR. Residues 76–90 are compositionally biased toward pro residues; that stretch reads AGPPPPPAPPPPPPG. The RING-CH-type zinc finger occupies 102-162; that stretch reads DSGLRTPQCR…ELCYFKYQVL (61 aa). Zn(2+) is bound by residues Cys110, Cys113, Cys126, Cys128, His136, Cys139, Cys152, and Cys155. 2 helical membrane-spanning segments follow: residues 185–205 and 219–239; these read IAAIVLGSLFLVASISWLIWS and LFQICYGMYGFMDVVCIGLIV. Disordered regions lie at residues 272-304 and 328-348; these read GDTGGGAAGKPGPRTSRTSPPAGAPTRPPAAQR and PPDARSSSHSGREVVMRVTTV.

Homodimer.

The protein resides in the golgi apparatus membrane. The protein localises to the lysosome membrane. The enzyme catalyses S-ubiquitinyl-[E2 ubiquitin-conjugating enzyme]-L-cysteine + [acceptor protein]-L-lysine = [E2 ubiquitin-conjugating enzyme]-L-cysteine + N(6)-ubiquitinyl-[acceptor protein]-L-lysine.. Its pathway is protein modification; protein ubiquitination. E3 ubiquitin-protein ligase that may mediate ubiquitination of MHC-I, CD4 and ICAM1, and promote their subsequent endocytosis and sorting to lysosomes via multivesicular bodies. E3 ubiquitin ligases accept ubiquitin from an E2 ubiquitin-conjugating enzyme in the form of a thioester and then directly transfer the ubiquitin to targeted substrates. This is E3 ubiquitin-protein ligase MARCHF9 (Marchf9) from Mus musculus (Mouse).